A 327-amino-acid chain; its full sequence is Olfactory receptor 51T1 (327 aa).

Topologically, residues 1-27 are extracellular; that stretch reads MAIFNNTTSSSSNFLLTAFPGLECAHV. N-linked (GlcNAc...) asparagine glycosylation is found at N5 and N6. A helical membrane pass occupies residues 28–48; the sequence is WISIPVCCLYTIALLGNSMIF. Residues 49–56 are Cytoplasmic-facing; sequence LVIITKRR. The helical transmembrane segment at 57–77 threads the bilayer; sequence LHKPMYYFLSMLAAVDLCLTI. Over 78–101 the chain is Extracellular; sequence TTLPTVLGVLWFHAREISFKACFI. Residues 102–122 traverse the membrane as a helical segment; it reads QMFFVHAFSLLESSVLVAMAF. The Cytoplasmic segment spans residues 123 to 141; sequence DRFVAICNPLNYATILTDR. Residues 142 to 162 form a helical membrane-spanning segment; the sequence is MVLVIGLVICIRPAVFLLPLL. The Extracellular segment spans residues 163–198; sequence VAINTVSFHGGHELSHPFCYHPEVIKYTYSKPWISS. Residues 199–219 traverse the membrane as a helical segment; the sequence is FWGLFLQLYLNGTDVLFILFS. Over 220–239 the chain is Cytoplasmic; that stretch reads YVLILRTVLGIVARKKQQKA. A helical membrane pass occupies residues 240–260; sequence LSTCVCHICAVTIFYVPLISL. Residues 261-275 are Extracellular-facing; sequence SLAHRLFHSTPRVLC. Residues 276 to 296 traverse the membrane as a helical segment; it reads STLANIYLLLPPVLNPIIYSL. The Cytoplasmic portion of the chain corresponds to 297 to 327; the sequence is KTKTIRQAMFQLLQSKGSWGFNVRGLRGRWD.

Belongs to the G-protein coupled receptor 1 family.

The protein resides in the cell membrane. In terms of biological role, odorant receptor. The sequence is that of Olfactory receptor 51T1 (OR51T1) from Homo sapiens (Human).